Consider the following 146-residue polypeptide: Cytochrome c' (146 aa).

An N-terminal signal peptide occupies residues 1–21 (MKLRIATIAGLVVLGSGFAVA). Heme c contacts are provided by Arg29, Thr86, Ala87, Cys134, Cys137, and His138.

In terms of assembly, monomer. Post-translationally, binds 1 heme c group covalently per subunit.

In terms of biological role, cytochrome c' is the most widely occurring bacterial c-type cytochrome. Cytochromes c' are high-spin proteins and the heme has no sixth ligand. Their exact function is not known. This chain is Cytochrome c' (cycA), found in Rhodopseudomonas palustris (strain ATCC BAA-98 / CGA009).